A 392-amino-acid polypeptide reads, in one-letter code: Putative glutamate--cysteine ligase 2 (392 aa).

Residues 347–367 are disordered; the sequence is AARKHGAAPEPGTRTRGDDGV.

The protein belongs to the glutamate--cysteine ligase type 2 family. YbdK subfamily.

It carries out the reaction L-cysteine + L-glutamate + ATP = gamma-L-glutamyl-L-cysteine + ADP + phosphate + H(+). Functionally, ATP-dependent carboxylate-amine ligase which exhibits weak glutamate--cysteine ligase activity. The chain is Putative glutamate--cysteine ligase 2 from Corynebacterium jeikeium (strain K411).